Reading from the N-terminus, the 246-residue chain is Mediator of RNA polymerase II transcription subunit 6 (246 aa).

Residues Val193 to Gln246 form a disordered region. Residues Gln206–Thr226 are compositionally biased toward basic and acidic residues. Lys208 is covalently cross-linked (Glycyl lysine isopeptide (Lys-Gly) (interchain with G-Cter in SUMO2)). Lys236 and Lys241 each carry N6-acetyllysine.

It belongs to the Mediator complex subunit 6 family. In terms of assembly, component of the Mediator complex, which is composed of MED1, MED4, MED6, MED7, MED8, MED9, MED10, MED11, MED12, MED13, MED13L, MED14, MED15, MED16, MED17, MED18, MED19, MED20, MED21, MED22, MED23, MED24, MED25, MED26, MED27, MED29, MED30, MED31, CCNC, CDK8 and CDC2L6/CDK11. The MED12, MED13, CCNC and CDK8 subunits form a distinct module termed the CDK8 module. Mediator containing the CDK8 module is less active than Mediator lacking this module in supporting transcriptional activation. Individual preparations of the Mediator complex lacking one or more distinct subunits have been variously termed ARC, CRSP, DRIP, PC2, SMCC and TRAP. Interacts with CTNNB1 and GLI3.

The protein localises to the nucleus. Its function is as follows. Component of the Mediator complex, a coactivator involved in the regulated transcription of nearly all RNA polymerase II-dependent genes. Mediator functions as a bridge to convey information from gene-specific regulatory proteins to the basal RNA polymerase II transcription machinery. Mediator is recruited to promoters by direct interactions with regulatory proteins and serves as a scaffold for the assembly of a functional preinitiation complex with RNA polymerase II and the general transcription factors. The polypeptide is Mediator of RNA polymerase II transcription subunit 6 (MED6) (Homo sapiens (Human)).